A 614-amino-acid chain; its full sequence is ATP-dependent zinc metalloprotease FtsH (614 aa).

Residues 1–7 (MKKQWKK) lie on the Stromal side of the membrane. A helical transmembrane segment spans residues 8 to 28 (IVLFVLPVIITLITLSSFLFY). Over 29 to 116 (NQDVVHNWSS…AHPSSSNVNL (88 aa)) the chain is Lumenal. Residues 117-137 (VSWLSNLLLPLILIITLFFFF) form a helical membrane-spanning segment. The Stromal segment spans residues 138–614 (RRGNKSSSGP…EFMRIVEERV (477 aa)). 211-218 (GPPGTGKT) serves as a coordination point for ATP. His432 contributes to the Zn(2+) binding site. Glu433 is an active-site residue. His436 and Asp510 together coordinate Zn(2+).

It in the central section; belongs to the AAA ATPase family. This sequence in the C-terminal section; belongs to the peptidase M41 family. In terms of assembly, homohexamer. The cofactor is Zn(2+).

It is found in the plastid. Its subcellular location is the chloroplast thylakoid membrane. Functionally, acts as a processive, ATP-dependent zinc metallopeptidase. The protein is ATP-dependent zinc metalloprotease FtsH of Cyanidium caldarium (Red alga).